Reading from the N-terminus, the 152-residue chain is Endoribonuclease YbeY (152 aa).

Zn(2+)-binding residues include His-117, His-121, and His-127.

Belongs to the endoribonuclease YbeY family. Zn(2+) is required as a cofactor.

Its subcellular location is the cytoplasm. Functionally, single strand-specific metallo-endoribonuclease involved in late-stage 70S ribosome quality control and in maturation of the 3' terminus of the 16S rRNA. In Sulfurihydrogenibium sp. (strain YO3AOP1), this protein is Endoribonuclease YbeY.